Here is a 320-residue protein sequence, read N- to C-terminus: NAD kinase (320 aa).

The active-site Proton acceptor is the Asp-96. NAD(+) is bound by residues 96–97 (DG), Arg-101, 170–171 (NE), Asp-200, and 211–216 (TAYAFS).

The protein belongs to the NAD kinase family. It depends on a divalent metal cation as a cofactor.

It is found in the cytoplasm. The enzyme catalyses NAD(+) + ATP = ADP + NADP(+) + H(+). In terms of biological role, involved in the regulation of the intracellular balance of NAD and NADP, and is a key enzyme in the biosynthesis of NADP. Catalyzes specifically the phosphorylation on 2'-hydroxyl of the adenosine moiety of NAD to yield NADP. This is NAD kinase from Rhodococcus opacus (strain B4).